Here is a 524-residue protein sequence, read N- to C-terminus: MLLQAAVQNRNVPLASSASYSRLLRCRSPVVSVAALSKKTAAIVCSISQVYGYGTVDYERRPIVQWNAIYKKISLMEKPELGAASVLNQWEKAGRKLTKWELCRVVKELRKYKRANQALEVYDWMNNRGERFRLSASDAAIQLDLIGKVRGIPDAEEFFLQLPENFKDRRVYGSLLNAYVRAKSREKAEALLNTMRDKGYALHPLPFNVMMTLYMNLREYDKVDAMVFEMKQKDIRLDIYSYNIWLSSCGSLGSVEKMELVYQQMKSDVSIYPNWTTFSTMATMYIKMGETEKAEDALRKVEARITGRNRIPYHYLLSLYGSLGNKKELYRVWHVYKSVVPSIPNLGYHALVSSLVRMGDIEGAEKVYEEWLPVKSSYDPRIPNLLMNAYVKNDQLETAEGLFDHMVEMGGKPSSSTWEILAVGHTRKRCISEALTCLRNAFSAEGSSNWRPKVLMLSGFFKLCEEESDVTSKEAVLELLRQSGDLEDKSYLALIDVDENRTVNNSEIDAHETDALLTQLQDDL.

PPR repeat units follow at residues 168 to 202 (DRRVYGSLLNAYVRAKSREKAEALLNTMRDKGYAL), 203 to 237 (HPLPFNVMMTLYMNLREYDKVDAMVFEMKQKDIRL), 238 to 268 (DIYSYNIWLSSCGSLGSVEKMELVYQQMKSD), 274 to 304 (NWTTFSTMATMYIKMGETEKAEDALRKVEAR), 309 to 339 (NRIPYHYLLSLYGSLGNKKELYRVWHVYKSV), 344 to 378 (PNLGYHALVSSLVRMGDIEGAEKVYEEWLPVKSSY), and 379 to 413 (DPRIPNLLMNAYVKNDQLETAEGLFDHMVEMGGKP).

This sequence belongs to the PPR family. P subfamily.

In Arabidopsis thaliana (Mouse-ear cress), this protein is Pentatricopeptide repeat-containing protein At1g02150.